A 119-amino-acid polypeptide reads, in one-letter code: MKIFSVALSMLRPVRFLIVAFTCALLFLSSTVPAFAISSYQSEPTEATDQLLETQKATDEVARSAPLGLKEVQKKSNEGLNEVQGAADINKQKRPANSQDSSSVEGDIQNFLEKVTGKN.

The segment at 64 to 119 is disordered; it reads SAPLGLKEVQKKSNEGLNEVQGAADINKQKRPANSQDSSSVEGDIQNFLEKVTGKN. Residues 95-104 show a composition bias toward polar residues; it reads PANSQDSSSV.

This is an uncharacterized protein from Nostoc sp. (strain PCC 7120 / SAG 25.82 / UTEX 2576).